We begin with the raw amino-acid sequence, 508 residues long: Gasdermin-C (508 aa).

The triggers pyroptosis stretch occupies residues 1 to 257 (MPSMLERISK…VGYCAARSEG (257 aa)).

It belongs to the gasdermin family. Homooligomer; homooligomeric ring-shaped pore complex containing 27-28 subunits when inserted in the membrane. Cleavage by CASP8 relieves autoinhibition by releasing the N-terminal moiety (Gasdermin-C, N-terminal) that initiates pyroptosis. The cleavage site is unclear. According to a publication, it takes place after Asp-240 in response to alpha-ketoglutarate. Another paper reports cleavage by CASP8 after Asp-365. In terms of processing, palmitoylated. Expressed mainly in trachea and spleen. In the esophagus, expressed in differentiating cells and probably in differentiated cells. Also detected in gastric epithelium.

The protein resides in the cytoplasm. Its subcellular location is the cytosol. It localises to the cell membrane. The full-length protein before cleavage is inactive: intramolecular interactions between N- and C-terminal domains mediate autoinhibition in the absence of activation signal. The intrinsic pyroptosis-inducing activity is carried by the released N-terminal moiety (Gasdermin-C, N-terminal) following cleavage by caspase CASP8. In terms of biological role, this form constitutes the precursor of the pore-forming protein: upon cleavage, the released N-terminal moiety (Gasdermin-C, N-terminal) binds to membranes and forms pores, triggering pyroptosis. Its function is as follows. Pore-forming protein that causes membrane permeabilization and pyroptosis. Produced by the cleavage of gasdermin-C by caspase CASP8 in response to death signals. After cleavage, moves to the plasma membrane where it strongly binds to membrane inner leaflet lipids. Homooligomerizes within the membrane and forms pores of 10-15 nanometers (nm) of inner diameter, triggering pyroptosis. This is Gasdermin-C from Homo sapiens (Human).